The following is a 167-amino-acid chain: Ubiquitin-conjugating enzyme E2 2 (167 aa).

One can recognise a UBC core domain in the interval 4–150 (PARRRLMRDF…VKETVEKSWE (147 aa)). C88 (glycyl thioester intermediate) is an active-site residue. The tract at residues 148–167 (SWEDNMDDMDDSDEDDEDDE) is disordered. Acidic residues predominate over residues 151–167 (DNMDDMDDSDEDDEDDE).

It belongs to the ubiquitin-conjugating enzyme family.

The protein resides in the cytoplasm. The protein localises to the nucleus. It catalyses the reaction S-ubiquitinyl-[E1 ubiquitin-activating enzyme]-L-cysteine + [E2 ubiquitin-conjugating enzyme]-L-cysteine = [E1 ubiquitin-activating enzyme]-L-cysteine + S-ubiquitinyl-[E2 ubiquitin-conjugating enzyme]-L-cysteine.. It participates in protein modification; protein ubiquitination. Its function is as follows. Catalyzes the covalent attachment of ubiquitin to other proteins. Plays a role in transcription regulation by catalyzing the monoubiquitination of histone H2B to form H2BK123ub1. H2BK123ub1 gives a specific tag for epigenetic transcriptional activation and is also a prerequisite for H3K4me and H3K79me formation. Also involved in postreplication repair of UV-damaged DNA, in N-end rule-dependent protein degradation and in sporulation. This is Ubiquitin-conjugating enzyme E2 2 (UBC2) from Candida glabrata (strain ATCC 2001 / BCRC 20586 / JCM 3761 / NBRC 0622 / NRRL Y-65 / CBS 138) (Yeast).